The primary structure comprises 95 residues: Protein TusB (95 aa).

This sequence belongs to the DsrH/TusB family. In terms of assembly, heterohexamer, formed by a dimer of trimers. The hexameric TusBCD complex contains 2 copies each of TusB, TusC and TusD. The TusBCD complex interacts with TusE.

It localises to the cytoplasm. Its function is as follows. Part of a sulfur-relay system required for 2-thiolation of 5-methylaminomethyl-2-thiouridine (mnm(5)s(2)U) at tRNA wobble positions. In Sodalis glossinidius (strain morsitans), this protein is Protein TusB.